The following is a 130-amino-acid chain: Small ribosomal subunit protein uS9 (130 aa).

The protein belongs to the universal ribosomal protein uS9 family.

This chain is Small ribosomal subunit protein uS9, found in Aliivibrio fischeri (strain MJ11) (Vibrio fischeri).